Consider the following 212-residue polypeptide: Thymidine kinase (212 aa).

Residues 11-18 (SPMNAGKT), 43-45 (DTR), and 86-89 (DEAQ) contribute to the ATP site. The active-site Proton acceptor is the glutamate 87. Substrate is bound at residue phenylalanine 119. Zn(2+) contacts are provided by cysteine 144, cysteine 147, cysteine 183, and cysteine 186.

It belongs to the thymidine kinase family.

It carries out the reaction thymidine + ATP = dTMP + ADP + H(+). The chain is Thymidine kinase (TK) from Encephalitozoon cuniculi (strain GB-M1) (Microsporidian parasite).